Reading from the N-terminus, the 69-residue chain is Conotoxin Eb6.22 (69 aa).

Residues 1 to 17 form the signal peptide; sequence VLIIAVLFLTACQLTTA. Positions 18–41 are excised as a propeptide; it reads ETYSRGRQKHRARRSTDKNSKWTR. 3 disulfides stabilise this stretch: Cys-43–Cys-57, Cys-50–Cys-61, and Cys-56–Cys-68.

It belongs to the conotoxin O1 superfamily. As to expression, expressed by the venom duct.

The protein resides in the secreted. This chain is Conotoxin Eb6.22 (E1), found in Conus ebraeus (Hebrew cone).